The chain runs to 389 residues: Na(+)/H(+) antiporter NhaA 1 (389 aa).

11 helical membrane-spanning segments follow: residues 12 to 32, 62 to 82, 97 to 117, 128 to 148, 157 to 177, 184 to 204, 220 to 240, 260 to 280, 282 to 302, 331 to 351, and 365 to 385; these read VLNE…ALLV, FLLW…GLEL, IVLP…LFAL, GWAI…MMCG, IFLL…IAIF, IAAF…NLLG, ISVL…AFFI, FWIA…VNLS, IDIG…LFVG, LYGV…IDGL, and LAIL…LKFF.

Belongs to the NhaA Na(+)/H(+) (TC 2.A.33) antiporter family.

It is found in the cell inner membrane. It catalyses the reaction Na(+)(in) + 2 H(+)(out) = Na(+)(out) + 2 H(+)(in). Its function is as follows. Na(+)/H(+) antiporter that extrudes sodium in exchange for external protons. The polypeptide is Na(+)/H(+) antiporter NhaA 1 (Campylobacter jejuni subsp. jejuni serotype O:2 (strain ATCC 700819 / NCTC 11168)).